The sequence spans 428 residues: Adenylosuccinate synthetase (428 aa).

GTP contacts are provided by residues 12–18 and 40–42; these read GDEGKGK and GHT. Residue D13 is the Proton acceptor of the active site. 2 residues coordinate Mg(2+): D13 and G40. IMP is bound by residues 13-16, 38-41, T128, R142, Q223, T238, and R302; these read DEGK and NAGH. H41 serves as the catalytic Proton donor. A substrate-binding site is contributed by 298–304; the sequence is TTTGRPR. Residues R304, 330–332, and 412–414 contribute to the GTP site; these read KLD and SVG.

This sequence belongs to the adenylosuccinate synthetase family. As to quaternary structure, homodimer. It depends on Mg(2+) as a cofactor.

It is found in the cytoplasm. The catalysed reaction is IMP + L-aspartate + GTP = N(6)-(1,2-dicarboxyethyl)-AMP + GDP + phosphate + 2 H(+). It participates in purine metabolism; AMP biosynthesis via de novo pathway; AMP from IMP: step 1/2. Plays an important role in the de novo pathway of purine nucleotide biosynthesis. Catalyzes the first committed step in the biosynthesis of AMP from IMP. The sequence is that of Adenylosuccinate synthetase from Desulforamulus reducens (strain ATCC BAA-1160 / DSM 100696 / MI-1) (Desulfotomaculum reducens).